The following is a 69-amino-acid chain: uncharacterized protein (69 aa).

An HTH cro/C1-type domain is found at 10 to 64 (IRAFRKLKGYTQEGFAKALGISVSILGEIERGNRLPSAAIIQDAADVLNISADEL). The H-T-H motif DNA-binding region spans 21 to 40 (QEGFAKALGISVSILGEIER).

This is an uncharacterized protein from Bacillus subtilis (strain 168).